Reading from the N-terminus, the 154-residue chain is Ferredoxin C 1, chloroplastic (154 aa).

The transit peptide at 1–56 (MATLPLPTQTSTISLPKPYLSNSFSFPLRNATLSTTTNRRNFLTTGRIIARAYKVV) directs the protein to the chloroplast. The 86-residue stretch at 57–142 (VEHDGKTTEL…DCHIKMIPEE (86 aa)) folds into the 2Fe-2S ferredoxin-type domain. 4 residues coordinate [2Fe-2S] cluster: cysteine 89, cysteine 94, cysteine 97, and cysteine 126.

The protein belongs to the 2Fe2S plant-type ferredoxin family. [2Fe-2S] cluster serves as cofactor.

Its subcellular location is the plastid. The protein localises to the chloroplast. Ferredoxins are iron-sulfur proteins that transfer electrons in a wide variety of metabolic reactions. Mediates alternative electron partitioning in conditions of acceptor limitation at photosystem I. Accepts electrons from photosystem I (PSI) and is capable of electron transfer with FNR, but cannot support photoreduction of NADP(+). The sequence is that of Ferredoxin C 1, chloroplastic from Arabidopsis thaliana (Mouse-ear cress).